Consider the following 193-residue polypeptide: MTITRQDAWTQDEDLLLAEVVLRHIREGGTQLSAFEEVGRALTRTAAACGFRWNSYVRKQYQSGIELAKKQRKELRKQIGVHSVNMPNSMKQTASASSEGKRDLSIQDVIQFLEQFKETPSAQEFQLEREKLKEQIQSLQKELEDLRSENQTLRNQLEMTEEDYKALIDIMDRARKMVVSKEDGRMKKAAQET.

An HTH myb-type domain is found at 1-61; sequence MTITRQDAWT…RWNSYVRKQY (61 aa). The segment at residues 35–57 is a DNA-binding region (H-T-H motif); that stretch reads FEEVGRALTRTAAACGFRWNSYV. Residues 122–177 are a coiled coil; it reads AQEFQLEREKLKEQIQSLQKELEDLRSENQTLRNQLEMTEEDYKALIDIMDRARKM.

This sequence belongs to the RsfA transcriptional regulator family.

Its function is as follows. Transcriptional factor that regulates the expression of several late sporulation genes. Controls genes of both sigma-E and sigma-K regulons, acting alone on some genes and in conjunction with SpoIIID or GerE on others. Regulates, directly or indirectly, the expression of genes encoding coat proteins such as cgeA, cotB, cotC, cotG, cotU and cotY. Controls late sporulation genes in two ways: directly, by binding to the promoter region of genes such as cotB, cotU and spoVIF, and acting directly on their transcription, and indirectly, through the activation of SpoVIF, which stabilizes the transcriptional activator GerE and consequently induces the expression of the GerE-dependent genes, such as cotC and cotG. Its effect is strongly positive on spoVIF, cotC, and cotG, weakly positive on cotB, and negative on cotU. The protein is Sporulation-specific transcriptional regulator GerR of Bacillus subtilis (strain 168).